The primary structure comprises 93 residues: Large ribosomal subunit protein uL23cz/uL23cy (93 aa).

It belongs to the universal ribosomal protein uL23 family. As to quaternary structure, part of the 50S ribosomal subunit.

It is found in the plastid. The protein resides in the chloroplast. Its function is as follows. Binds to 23S rRNA. The protein is Large ribosomal subunit protein uL23cz/uL23cy (rpl23-A) of Populus alba (White poplar).